Here is a 521-residue protein sequence, read N- to C-terminus: Beta-glucosidase 11 (521 aa).

The N-terminal stretch at 1 to 23 (MKLLSNSLMFLPLLALALTAVSS) is a signal peptide. A beta-D-glucoside contacts are provided by residues Gln45, His144, and 189–190 (NE). Glu190 acts as the Proton donor in catalysis. An intrachain disulfide couples Cys209 to Cys217. N-linked (GlcNAc...) asparagine glycosylation is found at Asn216 and Asn221. Tyr356 provides a ligand contact to a beta-D-glucoside. N-linked (GlcNAc...) asparagine glycans are attached at residues Asn364 and Asn388. The a beta-D-glucoside site is built by Glu422, Trp466, and Phe482. Glu422 acts as the Nucleophile in catalysis.

Belongs to the glycosyl hydrolase 1 family.

It carries out the reaction Hydrolysis of terminal, non-reducing beta-D-glucosyl residues with release of beta-D-glucose.. The sequence is that of Beta-glucosidase 11 from Arabidopsis thaliana (Mouse-ear cress).